The primary structure comprises 191 residues: Protein YceI (191 aa).

The signal sequence occupies residues methionine 1–alanine 22.

This sequence belongs to the UPF0312 family. Type 1 subfamily.

It localises to the periplasm. The protein is Protein YceI of Salmonella dublin (strain CT_02021853).